We begin with the raw amino-acid sequence, 292 residues long: 33 kDa chaperonin (292 aa).

2 cysteine pairs are disulfide-bonded: cysteine 230–cysteine 232 and cysteine 263–cysteine 266.

The protein belongs to the HSP33 family. Under oxidizing conditions two disulfide bonds are formed involving the reactive cysteines. Under reducing conditions zinc is bound to the reactive cysteines and the protein is inactive.

The protein resides in the cytoplasm. Redox regulated molecular chaperone. Protects both thermally unfolding and oxidatively damaged proteins from irreversible aggregation. Plays an important role in the bacterial defense system toward oxidative stress. The sequence is that of 33 kDa chaperonin from Escherichia coli O7:K1 (strain IAI39 / ExPEC).